Consider the following 453-residue polypeptide: TATA box-binding protein-associated factor RNA polymerase I subunit A (453 aa).

Component of the transcription factor SL1/TIF-IB complex, composed of TBP and at least TAF1A, TAF1B, TAF1C and TAF1D. In the complex interacts directly with TBP, TAF1A and TAF1B. Interaction of the SL1/TIF-IB subunits with TBP excludes interaction of TBP with the transcription factor IID (TFIID) subunits. Interacts with UBFT. Interacts with CEBPA (isoform 1 and isoform 4). Part of Pol I pre-initiation complex (PIC), in which Pol I core assembles with RRN3 and promoter-bound UTBF and SL1/TIF-IB complex.

It is found in the nucleus. It localises to the nucleolus. In terms of biological role, component of the transcription factor SL1/TIF-IB complex, which is involved in the assembly of the PIC (pre-initiation complex) during RNA polymerase I-dependent transcription. The rate of PIC formation probably is primarily dependent on the rate of association of SL1/TIF-IB with the rDNA promoter. SL1/TIF-IB is involved in stabilization of nucleolar transcription factor 1/UBTF on rDNA. Formation of SL1/TIF-IB excludes the association of TBP with TFIID subunits. The chain is TATA box-binding protein-associated factor RNA polymerase I subunit A (Taf1a) from Mus musculus (Mouse).